The following is a 185-amino-acid chain: Elongation factor P (185 aa).

This sequence belongs to the elongation factor P family.

It is found in the cytoplasm. The protein operates within protein biosynthesis; polypeptide chain elongation. Its function is as follows. Involved in peptide bond synthesis. Stimulates efficient translation and peptide-bond synthesis on native or reconstituted 70S ribosomes in vitro. Probably functions indirectly by altering the affinity of the ribosome for aminoacyl-tRNA, thus increasing their reactivity as acceptors for peptidyl transferase. The sequence is that of Elongation factor P (efp) from Nostoc sp. (strain PCC 7120 / SAG 25.82 / UTEX 2576).